A 304-amino-acid chain; its full sequence is Large ribosomal subunit protein uL18y (304 aa).

The protein belongs to the universal ribosomal protein uL18 family. Component of the large ribosomal subunit (LSU).

Its subcellular location is the cytoplasm. The protein resides in the nucleus. Functionally, component of the ribosome, a large ribonucleoprotein complex responsible for the synthesis of proteins in the cell. The small ribosomal subunit (SSU) binds messenger RNAs (mRNAs) and translates the encoded message by selecting cognate aminoacyl-transfer RNA (tRNA) molecules. The large subunit (LSU) contains the ribosomal catalytic site termed the peptidyl transferase center (PTC), which catalyzes the formation of peptide bonds, thereby polymerizing the amino acids delivered by tRNAs into a polypeptide chain. The nascent polypeptides leave the ribosome through a tunnel in the LSU and interact with protein factors that function in enzymatic processing, targeting, and the membrane insertion of nascent chains at the exit of the ribosomal tunnel. This chain is Large ribosomal subunit protein uL18y (RPL5B), found in Oryza sativa subsp. japonica (Rice).